The sequence spans 423 residues: Protein CLP1 homolog (423 aa).

ATP-binding positions include Glu19, Lys60, and 122–127 (DVGKTT).

The protein belongs to the Clp1 family. Clp1 subfamily.

It is found in the nucleus. Required for endonucleolytic cleavage during polyadenylation-dependent pre-mRNA 3'-end formation. The polypeptide is Protein CLP1 homolog (cbc) (Anopheles gambiae (African malaria mosquito)).